The sequence spans 118 residues: Basic phospholipase A2 4 (118 aa).

7 disulfide bridges follow: Cys11–Cys71, Cys27–Cys117, Cys29–Cys45, Cys44–Cys98, Cys51–Cys91, Cys60–Cys84, and Cys78–Cys89. Positions 28, 30, and 32 each coordinate Ca(2+). His48 is an active-site residue. Asp49 contributes to the Ca(2+) binding site. The active site involves Asp92.

Belongs to the phospholipase A2 family. Group I subfamily. D49 sub-subfamily. Monomer. It depends on Ca(2+) as a cofactor. Expressed by the venom gland.

It localises to the secreted. It carries out the reaction a 1,2-diacyl-sn-glycero-3-phosphocholine + H2O = a 1-acyl-sn-glycero-3-phosphocholine + a fatty acid + H(+). In terms of biological role, PLA2 catalyzes the calcium-dependent hydrolysis of the 2-acyl groups in 3-sn-phosphoglycerides. The chain is Basic phospholipase A2 4 from Laticauda semifasciata (Black-banded sea krait).